Reading from the N-terminus, the 733-residue chain is SWR1-complex protein 4 (733 aa).

Disordered stretches follow at residues 1-34 (MTSH…RPNL) and 98-128 (PDGT…DSSF). In terms of domain architecture, SANT spans 146-217 (NTNLKHPDWT…DLKARYYEVA (72 aa)). Positions 247 to 299 (KQEQNRKRFAENTLKRSSDEAREEEALLLEIKRIMARTERFNEERRELYNRLD) form a coiled coil. Positions 371–384 (AASRRESLAASSTA) are enriched in low complexity. Disordered stretches follow at residues 371–488 (AASR…GSGP) and 564–733 (KKAE…KQKK). Composition is skewed to basic and acidic residues over residues 387 to 423 (NDHH…DRHG), 463 to 484 (PERR…HDRL), 564 to 589 (KKAE…KGGE), and 610 to 653 (DDAK…KGEE). Over residues 699 to 710 (GSSSGAGASSGA) the composition is skewed to low complexity.

Belongs to the SWC4 family. Component of the SWR1 chromatin-remodeling complex and of the NuA4 histone acetyltransferase complex.

Its subcellular location is the nucleus. Component of the SWR1 complex which mediates the ATP-dependent exchange of histone H2A for the H2A variant H2A.Z leading to transcriptional regulation of selected genes by chromatin remodeling. Component of the NuA4 histone acetyltransferase complex which is involved in transcriptional activation of selected genes principally by acetylation of nucleosomal histone H4 and H2A. The NuA4 complex is also involved in DNA repair. The chain is SWR1-complex protein 4 (crc-1) from Neurospora crassa (strain ATCC 24698 / 74-OR23-1A / CBS 708.71 / DSM 1257 / FGSC 987).